We begin with the raw amino-acid sequence, 155 residues long: Probable Brix domain-containing ribosomal biogenesis protein (155 aa).

The Brix domain occupies 1-155; sequence MLITSSRKPS…KNYRKMVMSE (155 aa).

Probably involved in the biogenesis of the ribosome. In Methanococcoides burtonii (strain DSM 6242 / NBRC 107633 / OCM 468 / ACE-M), this protein is Probable Brix domain-containing ribosomal biogenesis protein.